The sequence spans 401 residues: Steroid C26-monooxygenase (401 aa).

Cysteine 343 contributes to the heme binding site.

Belongs to the cytochrome P450 family. Heme is required as a cofactor.

It catalyses the reaction cholest-4-en-3-one + 6 reduced [2Fe-2S]-[ferredoxin] + 3 O2 + 5 H(+) = (25R)-3-oxocholest-4-en-26-oate + 6 oxidized [2Fe-2S]-[ferredoxin] + 4 H2O. Its pathway is steroid metabolism; cholesterol degradation. Functionally, involved in the utilization of cholesterol as the sole carbon and energy source by degrading the side chain. Primarily catalyzes the sequential oxidation of the terminal methyl of cholest-4-en-3-one into (25R)-26-hydroxycholest-4-en-3-one (alcohol), (25R)-26-oxocholest-4-en-3-one (aldehyde), to finally yield the carboxylic acid (25R)-3-oxocholest-4-en-26-oate. Also able to sequentially oxidize cholesterol itself, not only cholest-4-en-3-one. This chain is Steroid C26-monooxygenase, found in Mycolicibacterium smegmatis (strain ATCC 700084 / mc(2)155) (Mycobacterium smegmatis).